A 375-amino-acid polypeptide reads, in one-letter code: Tyrosine--tRNA ligase (375 aa).

L-tyrosine contacts are provided by Y37, Y168, Q172, D175, and Q190. A 'KMSKS' region motif is present at residues 251-255; sequence KMSKS. Residue K254 participates in ATP binding.

Belongs to the class-I aminoacyl-tRNA synthetase family. TyrS type 4 subfamily. In terms of assembly, homodimer.

It is found in the cytoplasm. The catalysed reaction is tRNA(Tyr) + L-tyrosine + ATP = L-tyrosyl-tRNA(Tyr) + AMP + diphosphate + H(+). In terms of biological role, catalyzes the attachment of tyrosine to tRNA(Tyr) in a two-step reaction: tyrosine is first activated by ATP to form Tyr-AMP and then transferred to the acceptor end of tRNA(Tyr). In Thermococcus onnurineus (strain NA1), this protein is Tyrosine--tRNA ligase.